Here is a 148-residue protein sequence, read N- to C-terminus: Large-conductance mechanosensitive channel (148 aa).

The next 2 membrane-spanning stretches (helical) occupy residues 9-29 (AFAV…GAAF) and 79-99 (IQTV…VKAI).

The protein belongs to the MscL family. In terms of assembly, homopentamer.

The protein localises to the cell inner membrane. In terms of biological role, channel that opens in response to stretch forces in the membrane lipid bilayer. May participate in the regulation of osmotic pressure changes within the cell. The polypeptide is Large-conductance mechanosensitive channel (Pseudomonas syringae pv. tomato (strain ATCC BAA-871 / DC3000)).